The primary structure comprises 139 residues: MACGKTESGDDSGRFGRTGAGMFGFIMPGFVGIFRLSFFLLLSFAMASGSSSPASVPVSVAASVPDTTVNKIVISDGSEAHNINEFYDVKCHSHFYGLSVSSFASIWMMVNAIVFICAFGVFMRHWCYKAFTSDTAKGY.

Over 1 to 100 (MACGKTESGD…CHSHFYGLSV (100 aa)) the chain is Virion surface. The helical transmembrane segment at 101–121 (SSFASIWMMVNAIVFICAFGV) threads the bilayer. Topologically, residues 122-139 (FMRHWCYKAFTSDTAKGY) are intravirion.

This sequence belongs to the herpesviridae glycoprotein N family. Interacts (via N-terminus) with gM (via N-terminus). The gM-gN heterodimer forms the gCII complex.

It is found in the virion membrane. It localises to the host membrane. The protein resides in the host Golgi apparatus. The protein localises to the host trans-Golgi network. In terms of biological role, envelope glycoprotein necessary for proper maturation of gM and modulation of its membrane fusion activity. Also plays a critical role in virion morphogenesis. The chain is Envelope glycoprotein N from Mus musculus (Mouse).